A 175-amino-acid polypeptide reads, in one-letter code: Enhancer of mRNA-decapping protein 1 (175 aa).

Residues M1–K27 are compositionally biased toward polar residues. 2 disordered regions span residues M1–T113 and G155–L175. S2 carries the N-acetylserine modification. Residues A35–N47 are compositionally biased toward low complexity. The span at L58–N77 shows a compositional bias: polar residues. The residue at position 82 (S82) is a Phosphoserine. Residues N100–T113 are compositionally biased toward basic and acidic residues.

It belongs to the EDC family.

The protein localises to the cytoplasm. In terms of biological role, mRNA-binding protein which stimulates mRNA decapping by DCP1 and DCP2. Involved in the regulation of expression of multiple genes involved in glycolysis and gluconeogenesis. The sequence is that of Enhancer of mRNA-decapping protein 1 (EDC1) from Saccharomyces cerevisiae (strain ATCC 204508 / S288c) (Baker's yeast).